The chain runs to 242 residues: Zinc-finger homeodomain protein 11 (242 aa).

Residues 31 to 82 (YKECLKNHAANLGGHALDGCGEFMPSPTATSTDPSSLRCAACGCHRNFHRRD) form a ZF-HD dimerization-type; degenerate zinc finger. 2 disordered regions span residues 83–109 (PSEN…SRHV) and 135–161 (PGPS…RTRT). The segment at residues 156-213 (RKRTRTKFTPEQKIKMRAFAEKAGWKINGCDEKSVREFCNEVGIERGVLKVWMHNNKY) is a DNA-binding region (homeobox; atypical).

As to quaternary structure, homo- and heterodimer with other ZFHD proteins. Interacts with HIPP20, HIPP21, HIPP22, HIPP23, HIPP24, HIPP26, HIPP27, HIPP30 and MED25 (via ACID domain). Interacts with NAC019, NAC055 and NAC072 (via NAC binding domain). Binds to ZHD1, ZHD2, ZHD3, ZHD4, ZHD5, ZHD6, ZHD7, ZHD8, ZHD9, ZHD12, ZHD13 and ZHD14. Expressed in roots, inflorescences, open flowers and seeds. Detected in stems and seedlings.

Its subcellular location is the nucleus. In terms of biological role, transcription factor involved in the up-regulation of several stress-inducible genes. Acts as a transcriptional activator by interacting with MED25 and NAC proteins. Involved in increased drought tolerance. The sequence is that of Zinc-finger homeodomain protein 11 (ZHD11) from Arabidopsis thaliana (Mouse-ear cress).